We begin with the raw amino-acid sequence, 239 residues long: 1-(5-phosphoribosyl)-5-[(5-phosphoribosylamino)methylideneamino] imidazole-4-carboxamide isomerase (239 aa).

The Proton acceptor role is filled by D8. The active-site Proton donor is the D129.

This sequence belongs to the HisA/HisF family.

The protein resides in the cytoplasm. It catalyses the reaction 1-(5-phospho-beta-D-ribosyl)-5-[(5-phospho-beta-D-ribosylamino)methylideneamino]imidazole-4-carboxamide = 5-[(5-phospho-1-deoxy-D-ribulos-1-ylimino)methylamino]-1-(5-phospho-beta-D-ribosyl)imidazole-4-carboxamide. Its pathway is amino-acid biosynthesis; L-histidine biosynthesis; L-histidine from 5-phospho-alpha-D-ribose 1-diphosphate: step 4/9. This chain is 1-(5-phosphoribosyl)-5-[(5-phosphoribosylamino)methylideneamino] imidazole-4-carboxamide isomerase, found in Pelagibacter ubique (strain HTCC1062).